The primary structure comprises 213 residues: Probable chemoreceptor glutamine deamidase CheD (213 aa).

Residues 1–12 (MNRHRPHSHRSK) show a composition bias toward basic residues. Residues 1 to 25 (MNRHRPHSHRSKPASTQDQPDSVRR) form a disordered region.

It belongs to the CheD family.

The enzyme catalyses L-glutaminyl-[protein] + H2O = L-glutamyl-[protein] + NH4(+). Functionally, probably deamidates glutamine residues to glutamate on methyl-accepting chemotaxis receptors (MCPs), playing an important role in chemotaxis. The protein is Probable chemoreceptor glutamine deamidase CheD of Rhodopseudomonas palustris (strain BisA53).